A 212-amino-acid polypeptide reads, in one-letter code: MSDFAKVEQSLREEMTRIASSFFQRGYATGSAGNLSLLLPDGNLLATPTGSCLGNLDPQRLSKVAADGEWLSGDKPSKEVLFHLALYRNNPRCKAVVHLHSTWSTALSCLQGLDSSNVIRPFTPYVVMRMGNVPLVPYYRPGDKRIAQDLAELAADNQAFLLANHGPVVCGESLQEAANNMEELEETAKLIFILGDRPIRYLTAGEIAELRS.

The Proton acceptor role is filled by E79. Residues E79, H98, and H100 each coordinate Zn(2+). Y125 functions as the Proton donor in the catalytic mechanism. H165 contributes to the Zn(2+) binding site.

This sequence belongs to the aldolase class II family. AraD/FucA subfamily. Zn(2+) serves as cofactor.

It carries out the reaction 3-dehydro-4-O-phospho-D-erythronate + H(+) = dihydroxyacetone phosphate + CO2. It catalyses the reaction 3-dehydro-4-O-phospho-L-erythronate + H(+) = dihydroxyacetone phosphate + CO2. Its function is as follows. Catalyzes the decarboxylation of 3-oxo-tetronate 4-phosphate to dihydroxyacetone phosphate (DHAP) and CO(2). In Escherichia coli (strain K12), this protein is 3-oxo-tetronate 4-phosphate decarboxylase.